A 522-amino-acid chain; its full sequence is Putative lipase ATG15 (522 aa).

Residues 1 to 5 are Cytoplasmic-facing; the sequence is MYIPG. Residues 6–26 form a helical; Signal-anchor for type II membrane protein membrane-spanning segment; the sequence is PLRLSSYLLPFLSSPSPPAQS. Topologically, residues 27–522 are lumenal; the sequence is SPDTRTISFK…CYKWEFGEWN (496 aa). N-linked (GlcNAc...) asparagine glycans are attached at residues Asn48, Asn133, Asn196, Asn220, Asn302, and Asn309. Ser318 (charge relay system) is an active-site residue. N-linked (GlcNAc...) asparagine glycosylation is present at Asn361. A disordered region spans residues 481 to 506; that stretch reads RRGPKRQPGGEDPGWRKHGGVPKPVS.

The protein belongs to the AB hydrolase superfamily. Lipase family. As to quaternary structure, binds to both phosphatidylinositol (PI) and phosphatidylinositol 3,5-bisphosphate (PIP2).

It is found in the endoplasmic reticulum membrane. Its subcellular location is the golgi apparatus membrane. It localises to the endosome. The protein resides in the multivesicular body membrane. The protein localises to the prevacuolar compartment membrane. It carries out the reaction a triacylglycerol + H2O = a diacylglycerol + a fatty acid + H(+). Functionally, lipase which is essential for lysis of subvacuolar cytoplasm to vacuole targeted bodies and intravacuolar autophagic bodies. Involved in the lysis of intravacuolar multivesicular body (MVB) vesicles. The intravacuolar membrane disintegration by ATG15 is critical to life span extension. In Cryptococcus neoformans var. neoformans serotype D (strain JEC21 / ATCC MYA-565) (Filobasidiella neoformans), this protein is Putative lipase ATG15 (ATG15).